The following is a 609-amino-acid chain: UvrABC system protein C (609 aa).

Residues 15–93 (SSAGVYRMYD…IKQYMPKYNV (79 aa)) enclose the GIY-YIG domain. In terms of domain architecture, UVR spans 202 to 237 (QQVVTNLVTKMEQAAEEFHYEQAAAYRDQITALRKV).

It belongs to the UvrC family. In terms of assembly, interacts with UvrB in an incision complex.

The protein resides in the cytoplasm. The UvrABC repair system catalyzes the recognition and processing of DNA lesions. UvrC both incises the 5' and 3' sides of the lesion. The N-terminal half is responsible for the 3' incision and the C-terminal half is responsible for the 5' incision. The protein is UvrABC system protein C of Shewanella denitrificans (strain OS217 / ATCC BAA-1090 / DSM 15013).